We begin with the raw amino-acid sequence, 185 residues long: Ribosome-recycling factor (185 aa).

Belongs to the RRF family.

It localises to the cytoplasm. Its function is as follows. Responsible for the release of ribosomes from messenger RNA at the termination of protein biosynthesis. May increase the efficiency of translation by recycling ribosomes from one round of translation to another. This chain is Ribosome-recycling factor, found in Enterobacter sp. (strain 638).